A 290-amino-acid chain; its full sequence is ATP synthase gamma chain (290 aa).

The protein belongs to the ATPase gamma chain family. In terms of assembly, F-type ATPases have 2 components, CF(1) - the catalytic core - and CF(0) - the membrane proton channel. CF(1) has five subunits: alpha(3), beta(3), gamma(1), delta(1), epsilon(1). CF(0) has three main subunits: a, b and c.

The protein localises to the cell inner membrane. Its function is as follows. Produces ATP from ADP in the presence of a proton gradient across the membrane. The gamma chain is believed to be important in regulating ATPase activity and the flow of protons through the CF(0) complex. This Buchnera aphidicola subsp. Acyrthosiphon pisum (strain APS) (Acyrthosiphon pisum symbiotic bacterium) protein is ATP synthase gamma chain.